Consider the following 319-residue polypeptide: Forkhead box protein B1 (319 aa).

The segment at residues 13–107 is a DNA-binding region (fork-head); it reads KPPYSYISLT…ENGSFLRRRK (95 aa). The tract at residues 278-310 is disordered; the sequence is LSNSSPSMSPTSPQTATSQSSPATPSDTLTNPS. Residues 279–305 show a composition bias toward low complexity; that stretch reads SNSSPSMSPTSPQTATSQSSPATPSDT.

In terms of tissue distribution, in early gastrulae, expressed in the inner layer of the posterior dorsal ectoderm and in non-involuted mesoderm. By the mid-gastrula stage, expressed solely in the posterior ectoderm. At the end of gastrulation, expressed in ectodermal regions fated to become diencephalon, midbrain and hindbrain, and weakly expressed in regions fated to become spinal cord and tailbud. At the neurula stage, expressed in the midbrain and posterior forebrain (diencephalon) but not in the more anterior forebrain (telencephalon). Also expressed posteriorly in rhombomere 5. At tailbud stages, expression remains in the anterior brain and is also detectable along the length of the central nervous system and in the tailbud.

The protein localises to the nucleus. Probable transcription factor. May be involved in the early anteroposterior patterning of the neuroectoderm. In Xenopus laevis (African clawed frog), this protein is Forkhead box protein B1.